The sequence spans 573 residues: Splicing factor U2af large subunit A (573 aa).

The interval Met1–Asp175 is disordered. Positions Asn22–His93 are enriched in basic and acidic residues. Over residues Arg94–Asp105 the composition is skewed to basic residues. Over residues His106–Gly141 the composition is skewed to basic and acidic residues. Positions Thr159–Gln169 are enriched in basic residues. 3 consecutive RRM domains span residues Arg239–Asp322, Asp359–Gln437, and Gln478–Asp564.

It belongs to the splicing factor SR family. In terms of assembly, component of the spliceosome. Interacts with SUA. Interacts with SF1 in the nucleus.

Its subcellular location is the nucleus. Its function is as follows. Necessary for the splicing of pre-mRNA. This Arabidopsis thaliana (Mouse-ear cress) protein is Splicing factor U2af large subunit A.